The following is a 415-amino-acid chain: Probable G-protein coupled receptor 19 (415 aa).

The Extracellular segment spans residues 1-69; sequence MVFAHRMDNS…LKPGEVATAS (69 aa). Residues Asn25 and Asn52 are each glycosylated (N-linked (GlcNAc...) asparagine). Residues 70-90 form a helical membrane-spanning segment; that stretch reads IFFGILWLFSIFGNSLVCLVI. Residues 91–102 lie on the Cytoplasmic side of the membrane; the sequence is HRSRRTQSTTNY. The chain crosses the membrane as a helical span at residues 103–123; sequence FVVSMACADLLISVASTPFVL. Residues 124–143 lie on the Extracellular side of the membrane; the sequence is LQFTTGRWTLGSATCKVVRY. Cysteines 138 and 210 form a disulfide. A helical membrane pass occupies residues 144–161; it reads FQYLTPGVQIYVLLSICI. Over 162–182 the chain is Cytoplasmic; the sequence is DRFYTIVYPLSFKVSREKAKK. A helical transmembrane segment spans residues 183-203; sequence MIAASWVFDAGFVTPVLFFYG. At 204-221 the chain is on the extracellular side; it reads SNWDSHCNYFLPSSWEGT. A helical membrane pass occupies residues 222-242; it reads AYTVIHFLVGFVIPSVLIILF. Topologically, residues 243 to 277 are cytoplasmic; the sequence is YQKVIKYIWRIGTDGRTVRRTMNIVPRTKVKTIKM. Residues 278–298 traverse the membrane as a helical segment; the sequence is FLILNLLFLLSWLPFHVAQLW. Residues 299–309 lie on the Extracellular side of the membrane; that stretch reads HPHEQDYKKSS. Residues 310–325 form a helical membrane-spanning segment; sequence LVFTAITWISFSSSAS. Residues 326 to 415 lie on the Cytoplasmic side of the membrane; the sequence is KPTLYSIYNA…INSNPPNTFV (90 aa).

Belongs to the G-protein coupled receptor 1 family. As to expression, abundant expression in the brain.

It is found in the cell membrane. In terms of biological role, G-protein coupled receptor that plays a role in the regulation of circadian rhythms and energy metabolism. Participates in maintaining proper circadian gene expression in the suprachiasmatic nucleus (SCN), the locus of the master circadian clock in the brain. May function as a coordinator of aging-associated metabolic dysfunction, stress response, DNA integrity management, and eventual senescence. Upon binding to adropin, modulates mitochondrial energy metabolism via the p44/42-PDK4 signaling pathway, influencing pyruvate dehydrogenase activity. This chain is Probable G-protein coupled receptor 19 (GPR19), found in Homo sapiens (Human).